A 305-amino-acid chain; its full sequence is uncharacterized protein (305 aa).

This is an uncharacterized protein from Streptomyces griseus.